The primary structure comprises 172 residues: Shikimate kinase (172 aa).

11–16 (GAGKST) lines the ATP pocket. Position 15 (Ser15) interacts with Mg(2+). Substrate-binding residues include Asp33, Arg57, and Gly79. Arg117 contacts ATP. Arg136 lines the substrate pocket. Position 153 (Arg153) interacts with ATP.

This sequence belongs to the shikimate kinase family. In terms of assembly, monomer. The cofactor is Mg(2+).

It is found in the cytoplasm. The enzyme catalyses shikimate + ATP = 3-phosphoshikimate + ADP + H(+). It functions in the pathway metabolic intermediate biosynthesis; chorismate biosynthesis; chorismate from D-erythrose 4-phosphate and phosphoenolpyruvate: step 5/7. In terms of biological role, catalyzes the specific phosphorylation of the 3-hydroxyl group of shikimic acid using ATP as a cosubstrate. This chain is Shikimate kinase, found in Pseudomonas syringae pv. syringae (strain B728a).